The chain runs to 236 residues: Orotidine 5'-phosphate decarboxylase (236 aa).

Substrate-binding positions include Asp-17, Lys-39, Asp-66 to Thr-75, Thr-125, Arg-186, Gln-195, Gly-215, and Arg-216. Lys-68 (proton donor) is an active-site residue.

Belongs to the OMP decarboxylase family. Type 1 subfamily. As to quaternary structure, homodimer.

It catalyses the reaction orotidine 5'-phosphate + H(+) = UMP + CO2. Its pathway is pyrimidine metabolism; UMP biosynthesis via de novo pathway; UMP from orotate: step 2/2. Functionally, catalyzes the decarboxylation of orotidine 5'-monophosphate (OMP) to uridine 5'-monophosphate (UMP). This is Orotidine 5'-phosphate decarboxylase from Buchnera aphidicola subsp. Acyrthosiphon pisum (strain APS) (Acyrthosiphon pisum symbiotic bacterium).